A 723-amino-acid polypeptide reads, in one-letter code: uncharacterized protein (723 aa).

The span at Met-1 to Lys-12 shows a compositional bias: basic residues. Disordered regions lie at residues Met-1 to Ile-166, Ile-181 to Gly-212, Leu-268 to Asn-289, and Lys-391 to Thr-455. A compositionally biased stretch (low complexity) spans Asp-30–Thr-42. Basic and acidic residues-rich tracts occupy residues Glu-45–Asp-129 and Thr-149–Ile-166. Residues Ile-53–Tyr-173 are a coiled coil. Over residues Ile-181–Lys-190 the composition is skewed to basic residues. Positions Pro-193–Ala-204 are enriched in pro residues. The span at Asp-272–Asp-288 shows a compositional bias: acidic residues. Low complexity predominate over residues Asp-397–Thr-455.

This is an uncharacterized protein from Dictyostelium discoideum (Social amoeba).